A 140-amino-acid chain; its full sequence is MFDIGFSELLLIAVVALVVLGPERLPKAARFAGLLVRRARTQWESIKQELERELEAEALKRNLENAQQVIHDAQAQLQSNQQDMNIQNSISILHEQTKRDIHPDRNTNTLELGTAVHHVHVTSPPPSTSTHGNNGQEKSQ.

A helical membrane pass occupies residues 1 to 21 (MFDIGFSELLLIAVVALVVLG). Residues 119–140 (VHVTSPPPSTSTHGNNGQEKSQ) are disordered. A compositionally biased stretch (polar residues) spans 128 to 140 (TSTHGNNGQEKSQ).

Belongs to the TatB family. The Tat system comprises two distinct complexes: a TatABC complex, containing multiple copies of TatA, TatB and TatC subunits, and a separate TatA complex, containing only TatA subunits. Substrates initially bind to the TatABC complex, which probably triggers association of the separate TatA complex to form the active translocon.

Its subcellular location is the cell inner membrane. Its function is as follows. Part of the twin-arginine translocation (Tat) system that transports large folded proteins containing a characteristic twin-arginine motif in their signal peptide across membranes. Together with TatC, TatB is part of a receptor directly interacting with Tat signal peptides. TatB may form an oligomeric binding site that transiently accommodates folded Tat precursor proteins before their translocation. The sequence is that of Sec-independent protein translocase protein TatB from Xylella fastidiosa (strain 9a5c).